The following is a 152-amino-acid chain: UPF0178 protein YaiI (152 aa).

The protein belongs to the UPF0178 family.

The chain is UPF0178 protein YaiI from Shigella boydii serotype 18 (strain CDC 3083-94 / BS512).